We begin with the raw amino-acid sequence, 835 residues long: Leucine--tRNA ligase (835 aa).

The 'HIGH' region signature appears at 36-46 (PYPSGKIHVGH). The 'KMSKS' region motif lies at 602-606 (KMSKS). Lys-605 is a binding site for ATP.

The protein belongs to the class-I aminoacyl-tRNA synthetase family.

It localises to the cytoplasm. It catalyses the reaction tRNA(Leu) + L-leucine + ATP = L-leucyl-tRNA(Leu) + AMP + diphosphate. This is Leucine--tRNA ligase from Rickettsia africae (strain ESF-5).